Consider the following 125-residue polypeptide: MARVKRGVTSHAKHKKVLKAAKGYYGRRKNTIRIAKQAVEKGLQYAYRDRKNRKRSFRALWIQRLNAAVREHGLTYSRFIDGLAKAGIVVDRKALSELAIHEPAAFSAVVEKAKAALPAETAKAA.

Belongs to the bacterial ribosomal protein bL20 family.

Functionally, binds directly to 23S ribosomal RNA and is necessary for the in vitro assembly process of the 50S ribosomal subunit. It is not involved in the protein synthesizing functions of that subunit. The protein is Large ribosomal subunit protein bL20 of Methylobacterium nodulans (strain LMG 21967 / CNCM I-2342 / ORS 2060).